Consider the following 803-residue polypeptide: Volume-regulated anion channel subunit LRRC8C (803 aa).

Topologically, residues 1–22 (MIPVTEFRQFSEQQPAFRVLKP) are cytoplasmic. Residues 23–47 (WWDVFTDYLSVAMLMIGVFGCTLQV) traverse the membrane as a helical segment. The Extracellular segment spans residues 48–124 (MQDKIICLPK…CYERALHWYA (77 aa)). Cystine bridges form between Cys54-Cys308 and Cys115-Cys293. N-linked (GlcNAc...) asparagine glycosylation is found at Asn64 and Asn70. The helical transmembrane segment at 125-144 (KYFPYLVLIHTLVFMLCSNF) threads the bilayer. Residues 145–262 (WFKFPGSSSK…EEGDILYAMY (118 aa)) are Cytoplasmic-facing. Residues 177-209 (EVSGEDSEEKDNRKNNMNRSNTIQSGPEDSLVN) form a disordered region. Residues 191–209 (NNMNRSNTIQSGPEDSLVN) are compositionally biased toward polar residues. Phosphoserine occurs at positions 212 and 215. Residues 263–284 (VRQTVLKVIKFLIIIAYNSALV) form a helical membrane-spanning segment. At 285 to 314 (SKVQFTVDCNVDIQDMTGYKNFSCNHTMAH) the chain is on the extracellular side. Residues 315–339 (LFSKLSFCYLCFVSIYGLTCLYTLY) form a helical membrane-spanning segment. The Cytoplasmic portion of the chain corresponds to 340 to 803 (WLFYRSLREY…SDVREQMKTE (464 aa)). LRR repeat units lie at residues 397 to 420 (ENKL…KLQT), 421 to 443 (NAHN…VFEI), 446 to 466 (LQSL…IAQL), 467 to 488 (DNLQ…ALSF), 490 to 513 (KENL…MYGL), 515 to 537 (NLEE…TLES), 541 to 563 (LKSL…VVDV), 565 to 587 (SHLQ…NLKK), 588 to 611 (MTNL…VFSL), 613 to 635 (SLQE…SFQH), 636 to 659 (LRKL…IKKL), 660 to 682 (TSLE…LFLC), 684 to 705 (KIRY…IGVL), 706 to 728 (QSLQ…LYFC), 730 to 751 (KLKT…IGNL), 753 to 774 (FLSY…LGDC), and 776 to 799 (ALKR…VREQ).

This sequence belongs to the LRRC8 family. Heterohexamer; oligomerizes with other LRRC8 proteins (LRRC8A, LRRC8B, LRRC8D and/or LRRC8E) to form a heterohexamer. Homoheptamer; inactive, likely because it is not targeted to the plasma membrane in the absence of LRRC8A. In vivo, the subunit composition may depend primarily on expression levels, and heterooligomeric channels containing various proportions of the different LRRC8 proteins may coexist. In terms of tissue distribution, expressed at highest levels in skeletal muscle, and at moderate levels in heart, lung and peripheral blood leukocytes.

It localises to the cell membrane. It is found in the endoplasmic reticulum membrane. It catalyses the reaction chloride(in) = chloride(out). The enzyme catalyses iodide(out) = iodide(in). The catalysed reaction is taurine(out) = taurine(in). It carries out the reaction 2',3'-cGAMP(out) = 2',3'-cGAMP(in). In terms of biological role, non-essential component of the volume-regulated anion channel (VRAC, also named VSOAC channel), an anion channel required to maintain a constant cell volume in response to extracellular or intracellular osmotic changes. The VRAC channel conducts iodide better than chloride and can also conduct organic osmolytes like taurine. Plays a redundant role in the efflux of amino acids, such as aspartate and glutamate, in response to osmotic stress. The VRAC channel also mediates transport of immunoreactive cyclic dinucleotide GMP-AMP (2'-3'-cGAMP), an immune messenger produced in response to DNA virus in the cytosol. Channel activity requires LRRC8A plus at least one other family member (LRRC8B, LRRC8C, LRRC8D or LRRC8E); channel characteristics depend on the precise subunit composition. The protein is Volume-regulated anion channel subunit LRRC8C of Homo sapiens (Human).